The following is a 3075-amino-acid chain: Probable polyketide synthase 30 (3075 aa).

In terms of domain architecture, Ketosynthase family 3 (KS3) spans 26-458 (SGDVAVIGIG…GSNVCLILSE (433 aa)). Residues C198, H337, and H381 each act as for beta-ketoacyl synthase activity in the active site. Residues 663-696 (GVSADIIIGHSLGEVSSPYCSGMIDFQTLCYLTY) are acyl/malonyl transferase. S673 (for acyl/malonyl transferase activity) is an active-site residue. Residues 963–1085 (GPSINNLGNN…GNFSLTKHNS (123 aa)) form an N-terminal hotdog fold region. The PKS/mFAS DH domain occupies 963-1269 (GPSINNLGNN…CALVSLGSNP (307 aa)). The active-site Proton acceptor; for dehydratase activity is H997. The segment at 1102 to 1269 (NFTSMSKQDF…CALVSLGSNP (168 aa)) is C-terminal hotdog fold. The active-site Proton donor; for dehydratase activity is the D1174. The region spanning 2533 to 2610 (DNNEIIRSTI…QSIEIIKSAH (78 aa)) is the Carrier domain. The residue at position 2570 (S2570) is an O-(pantetheine 4'-phosphoryl)serine.

Requires pantetheine 4'-phosphate as cofactor.

Its function is as follows. Probable polyketide synthase. May be involved in the process of cell migration. The protein is Probable polyketide synthase 30 (pks30) of Dictyostelium discoideum (Social amoeba).